The chain runs to 88 residues: LYR motif-containing protein 2 (88 aa).

The transit peptide at 1–19 (MAASRLPPATLTLKQFVRR) directs the protein to the mitochondrion.

The protein belongs to the complex I LYR family.

The protein resides in the mitochondrion. Functionally, involved in efficient integration of the N-module into mitochondrial respiratory chain complex I. This chain is LYR motif-containing protein 2 (LYRM2), found in Pongo abelii (Sumatran orangutan).